Consider the following 176-residue polypeptide: Tubulin polymerization-promoting protein family member 3 (176 aa).

The tract at residues 126 to 152 (TDTSKYTGSHKERFDESGKGKGKGGRE) is disordered. The segment covering 134-152 (SHKERFDESGKGKGKGGRE) has biased composition (basic and acidic residues).

Belongs to the TPPP family.

It localises to the cytoplasm. The protein localises to the cytoskeleton. Regulator of microtubule dynamic that has microtubule bundling activity. This Xenopus tropicalis (Western clawed frog) protein is Tubulin polymerization-promoting protein family member 3 (tppp3).